The primary structure comprises 203 residues: Large ribosomal subunit protein bL25 (203 aa).

This sequence belongs to the bacterial ribosomal protein bL25 family. CTC subfamily. As to quaternary structure, part of the 50S ribosomal subunit; part of the 5S rRNA/L5/L18/L25 subcomplex. Contacts the 5S rRNA. Binds to the 5S rRNA independently of L5 and L18.

This is one of the proteins that binds to the 5S RNA in the ribosome where it forms part of the central protuberance. The polypeptide is Large ribosomal subunit protein bL25 (Rickettsia peacockii (strain Rustic)).